A 100-amino-acid polypeptide reads, in one-letter code: Small ribosomal subunit protein bS6 (100 aa).

The protein belongs to the bacterial ribosomal protein bS6 family.

Binds together with bS18 to 16S ribosomal RNA. This chain is Small ribosomal subunit protein bS6, found in Enterococcus faecalis (strain ATCC 700802 / V583).